The following is a 212-amino-acid chain: Glycerol-3-phosphate acyltransferase (212 aa).

5 consecutive transmembrane segments (helical) span residues 3-23, 51-71, 78-98, 115-135, and 139-159; these read ILLAALVAYLIGSVSFAVIVS, KAAILTLVGDAFKGWLAVWLA, DVAVAWVAIAVFVGHLYPVFF, AVHPVLGLATALTWLIVAFFF, and SLAALVAAVFAPVFDVFLFGT.

The protein belongs to the PlsY family. In terms of assembly, probably interacts with PlsX.

The protein localises to the cell inner membrane. It carries out the reaction an acyl phosphate + sn-glycerol 3-phosphate = a 1-acyl-sn-glycero-3-phosphate + phosphate. The protein operates within lipid metabolism; phospholipid metabolism. Functionally, catalyzes the transfer of an acyl group from acyl-phosphate (acyl-PO(4)) to glycerol-3-phosphate (G3P) to form lysophosphatidic acid (LPA). This enzyme utilizes acyl-phosphate as fatty acyl donor, but not acyl-CoA or acyl-ACP. This Burkholderia vietnamiensis (strain G4 / LMG 22486) (Burkholderia cepacia (strain R1808)) protein is Glycerol-3-phosphate acyltransferase.